Consider the following 150-residue polypeptide: Large-conductance mechanosensitive channel (150 aa).

A run of 2 helical transmembrane segments spans residues 19-39 (VGII…SDVL) and 85-105 (GIFL…FMLI).

The protein belongs to the MscL family. As to quaternary structure, homopentamer.

It localises to the cell inner membrane. In terms of biological role, channel that opens in response to stretch forces in the membrane lipid bilayer. May participate in the regulation of osmotic pressure changes within the cell. The polypeptide is Large-conductance mechanosensitive channel (Chlorobium limicola (strain DSM 245 / NBRC 103803 / 6330)).